The following is a 349-amino-acid chain: Anthranilate phosphoribosyltransferase (349 aa).

5-phospho-alpha-D-ribose 1-diphosphate-binding positions include Gly82, 85 to 86 (GD), Thr90, 92 to 95 (NVST), 110 to 118 (KHGNRSVSS), and Gly122. Position 82 (Gly82) interacts with anthranilate. Mg(2+) is bound at residue Ser94. An anthranilate-binding site is contributed by Asn113. Arg168 lines the anthranilate pocket. Positions 232 and 233 each coordinate Mg(2+).

It belongs to the anthranilate phosphoribosyltransferase family. As to quaternary structure, homodimer. Requires Mg(2+) as cofactor.

It carries out the reaction N-(5-phospho-beta-D-ribosyl)anthranilate + diphosphate = 5-phospho-alpha-D-ribose 1-diphosphate + anthranilate. It functions in the pathway amino-acid biosynthesis; L-tryptophan biosynthesis; L-tryptophan from chorismate: step 2/5. Functionally, catalyzes the transfer of the phosphoribosyl group of 5-phosphorylribose-1-pyrophosphate (PRPP) to anthranilate to yield N-(5'-phosphoribosyl)-anthranilate (PRA). The chain is Anthranilate phosphoribosyltransferase from Methanosphaera stadtmanae (strain ATCC 43021 / DSM 3091 / JCM 11832 / MCB-3).